The chain runs to 506 residues: MKHFSLLFIFLVILLATSYSDAFTRNSFPKDFLFGAATSAYQWEGAVAEDGRTPSVWDTFSNSYDTGNGDVTSDGYHKYKEDVKLMATMGLESFRFSISWSRLIPNGRGLINPKGLLFYNNLIKDLKSHGIEPHVTLYHYDLPQSLEDEYGGWINRKIIEDFTAYADVCFREFGEDVKLWTTINEATIFAIGSYDQGTAPPGHCSPNKFVNCSTGNSSTEPYIAGHNILLAHASASKLYKLKYKSKQKGSIGLSIFAFGLSPYTNSKDDEIATQRAKTFLYGWMLKPLVFGDYPDEMKKTVGSRLPVFSEEESEQVKGSSDFIGIIHYTTFYVTNHQPSASLFPSMGEGFFKDMGVYIIPTGNSSFLVWEATPWGLEGILEYIKQSYNNPPVYILENGMPMVRDSTLQDTQRIEYIQAYIDAVLNAMKNGSDTRGYFVWSMVDVYEILSGYTTSFGMYHVNFSDPGRKRTPKLSASWYTGFLNGTIDVASQDTIQLWSNFSVSSSL.

A signal peptide spans 1–22 (MKHFSLLFIFLVILLATSYSDA). Residues glutamine 42, histidine 139, and 184-185 (NE) contribute to the a beta-D-glucoside site. The active-site Proton donor is glutamate 185. Cysteines 204 and 212 form a disulfide. N-linked (GlcNAc...) asparagine glycans are attached at residues asparagine 211 and asparagine 216. Residue tyrosine 328 coordinates a beta-D-glucoside. N-linked (GlcNAc...) asparagine glycosylation is present at asparagine 363. Glutamate 396 is a binding site for a beta-D-glucoside. The active-site Nucleophile is glutamate 396. Asparagine 429 carries an N-linked (GlcNAc...) asparagine glycan. A beta-D-glucoside contacts are provided by tryptophan 439 and phenylalanine 455. 3 N-linked (GlcNAc...) asparagine glycosylation sites follow: asparagine 461, asparagine 483, and asparagine 499.

The protein belongs to the glycosyl hydrolase 1 family.

The catalysed reaction is Hydrolysis of terminal, non-reducing beta-D-glucosyl residues with release of beta-D-glucose.. This chain is Beta-glucosidase 9, found in Arabidopsis thaliana (Mouse-ear cress).